A 745-amino-acid chain; its full sequence is 5-methyltetrahydropteroyltriglutamate--homocysteine methyltransferase (745 aa).

5-methyltetrahydropteroyltri-L-glutamate contacts are provided by residues 19-22 (RELK) and K119. Residues 418–420 (IGS) and E471 each bind L-homocysteine. Residues 418–420 (IGS) and E471 contribute to the L-methionine site. 5-methyltetrahydropteroyltri-L-glutamate-binding positions include 502 to 503 (RC) and W548. D586 serves as a coordination point for L-homocysteine. D586 lines the L-methionine pocket. E592 is a binding site for 5-methyltetrahydropteroyltri-L-glutamate. The Zn(2+) site is built by H628, C630, and E652. The active-site Proton donor is H681. C713 lines the Zn(2+) pocket.

The protein belongs to the vitamin-B12 independent methionine synthase family. It depends on Zn(2+) as a cofactor.

The enzyme catalyses 5-methyltetrahydropteroyltri-L-glutamate + L-homocysteine = tetrahydropteroyltri-L-glutamate + L-methionine. Its pathway is amino-acid biosynthesis; L-methionine biosynthesis via de novo pathway; L-methionine from L-homocysteine (MetE route): step 1/1. Catalyzes the transfer of a methyl group from 5-methyltetrahydrofolate to homocysteine resulting in methionine formation. The polypeptide is 5-methyltetrahydropteroyltriglutamate--homocysteine methyltransferase (Corynebacterium glutamicum (strain ATCC 13032 / DSM 20300 / JCM 1318 / BCRC 11384 / CCUG 27702 / LMG 3730 / NBRC 12168 / NCIMB 10025 / NRRL B-2784 / 534)).